A 912-amino-acid polypeptide reads, in one-letter code: Intercellular adhesion molecule 5 (912 aa).

An N-terminal signal peptide occupies residues 1-29 (MPGPSPGLRALLGFWVALGLGILRLSAVA). At 30-826 (QEPFWADLQP…RITVRVAGPW (797 aa)) the chain is on the extracellular side. Ig-like C2-type domains lie at 47–127 (GGSL…PLPP), 132–232 (GENF…RLLA), 239–324 (DSQS…LLTL), 332–395 (GKLV…NGSA), 403–481 (PRLD…VTLT), 486–561 (PALD…VAVT), 566–645 (PSFE…NPLG), 659–734 (PQMD…TVGV), and 738–819 (PVVA…RRIT). N-linked (GlcNAc...) (high mannose) asparagine glycosylation is present at Asn-53. 2 cysteine pairs are disulfide-bonded: Cys-54/Cys-97 and Cys-58/Cys-101. A glycan (N-linked (GlcNAc...) asparagine) is linked at Asn-134. The cysteines at positions 139 and 195 are disulfide-linked. Phosphothreonine occurs at positions 179 and 181. N-linked (GlcNAc...) asparagine glycosylation is found at Asn-192 and Asn-211. Cys-246 and Cys-297 form a disulfide bridge. Asn-311, Asn-366, and Asn-392 each carry an N-linked (GlcNAc...) asparagine glycan. Cys-339 and Cys-378 are disulfide-bonded. Cystine bridges form between Cys-410–Cys-465, Cys-493–Cys-546, and Cys-573–Cys-638. Residues Asn-576 and Asn-639 are each glycosylated (N-linked (GlcNAc...) asparagine). Cys-666 and Cys-717 are joined by a disulfide. A disordered region spans residues 678–708 (AAGPACARGRPSPRVRCSREGAPRPARPRVS). N-linked (GlcNAc...) asparagine glycans are attached at residues Asn-756, Asn-787, and Asn-788. Cysteines 761 and 806 form a disulfide. The chain crosses the membrane as a helical span at residues 827 to 847 (LWIAVGGAVGGAVLLAAGAGL). Residues 848–912 (AFYVQSTACK…EVFAIQLTSA (65 aa)) are Cytoplasmic-facing. The tract at residues 880–902 (GGAGSGAEGGPEAEDSAESPAGG) is disordered.

The protein belongs to the immunoglobulin superfamily. ICAM family. Glycosylation at Asn-53 is critical for functional folding. As to expression, expressed on neurons in the most rostral segment of the mammalian brain, the telencephalon.

It localises to the membrane. Its function is as follows. ICAM proteins are ligands for the leukocyte adhesion protein LFA-1 (integrin alpha-L/beta-2). The sequence is that of Intercellular adhesion molecule 5 (ICAM5) from Oryctolagus cuniculus (Rabbit).